We begin with the raw amino-acid sequence, 229 residues long: Cytidylate kinase (229 aa).

12–20 (GPSGSGKGT) lines the ATP pocket.

It belongs to the cytidylate kinase family. Type 1 subfamily.

Its subcellular location is the cytoplasm. It catalyses the reaction CMP + ATP = CDP + ADP. The enzyme catalyses dCMP + ATP = dCDP + ADP. In Pseudomonas syringae pv. syringae (strain B728a), this protein is Cytidylate kinase.